The chain runs to 395 residues: uncharacterized protein (395 aa).

2 disordered regions span residues 185–282 (RREV…SSTA) and 316–372 (GSST…TCSS). Residues 248–257 (LHLRTRHPHR) show a composition bias toward basic residues. The segment covering 342-360 (ARASTHSRSSPSASANSRY) has biased composition (low complexity).

This is an uncharacterized protein from Streptomyces fradiae (Streptomyces roseoflavus).